The sequence spans 216 residues: Small ribosomal subunit protein uS5 (216 aa).

In terms of domain architecture, S5 DRBM spans 51 to 114 (LEEEVIDVNL…DDAKFNIIKV (64 aa)).

The protein belongs to the universal ribosomal protein uS5 family. Part of the 30S ribosomal subunit. Contacts protein S4.

With S4 and S12 plays an important role in translational accuracy. In Methanothermobacter thermautotrophicus (strain ATCC 29096 / DSM 1053 / JCM 10044 / NBRC 100330 / Delta H) (Methanobacterium thermoautotrophicum), this protein is Small ribosomal subunit protein uS5.